A 54-amino-acid polypeptide reads, in one-letter code: Potassium channel toxin alpha-KTx 14.1 (54 aa).

Positions 1–23 (MKIFFAILLILAVCSMAIWTVNG) are cleaved as a signal peptide.

It belongs to the short scorpion toxin superfamily. Potassium channel inhibitor family. Alpha-KTx 14 subfamily. Probably has three disulfide bridges. In terms of tissue distribution, expressed by the venom gland.

Its subcellular location is the secreted. Its function is as follows. Potential blocker of potassium channels. This Olivierus martensii (Manchurian scorpion) protein is Potassium channel toxin alpha-KTx 14.1.